Consider the following 427-residue polypeptide: METTISEIHVENKDEKRSAEGSPGAERQKEKASMLCFKRRKKAAKALKPKAGSEAADVARKCPQEAGASDQPEPTRGAWASLKRLVTRRKRSESSKQQKPLEGEMQPAINAEDADLSKKKAKSRLKIPCIKFPRGPKRSNHSKIIEDSDCSIKVQEEAEILDIQTQTPLNDQATKAKSTQDLSEGISRKDGDEVCESNVSNSTTSGEKVISVELGLDNGHSAIQTGTLILEEIETIKEKQDVQPQQASPLETSETDHQQPVLSDVPPLPAIPDQQIVEEASNSTLESAPNGKDYESTEIVAEETKPKDTELSQESDFKENGITEEKSKSEESKRMEPIAIIITDTEISEFDVTKSKNVPKQFLISAENEQVGVFANDNGFEDRTSEQYETLLIETASSLVKNAIQLSIEQLVNEMASDDNKINNLLQ.

The disordered stretch occupies residues 1–122 (METTISEIHV…DADLSKKKAK (122 aa)). Positions 1 to 170 (METTISEIHV…LDIQTQTPLN (170 aa)) are essential to the intracellular anchoring function. The span at 8–19 (IHVENKDEKRSA) shows a compositional bias: basic and acidic residues. Position 22 is a phosphoserine (S22). Residue C36 is the site of S-palmitoyl cysteine attachment. The span at 37 to 48 (FKRRKKAAKALK) shows a compositional bias: basic residues. Residues 76-96 (RGAWASLKRLVTRRKRSESSK) carry the AKAP CaM-binding motif. Residues 92–102 (SESSKQQKPLE) show a composition bias toward basic and acidic residues. C129 is lipidated: S-palmitoyl cysteine. 2 stretches are compositionally biased toward polar residues: residues 171-182 (DQATKAKSTQDL) and 242-252 (VQPQQASPLET). 3 disordered regions span residues 171–205 (DQATKAKSTQDLSEGISRKDGDEVCESNVSNSTTS), 239–269 (KQDVQPQQASPLETSETDHQQPVLSDVPPLP), and 281–333 (SNST…EESK). Basic and acidic residues predominate over residues 302–333 (EETKPKDTELSQESDFKENGITEEKSKSEESK). Positions 392-405 (LIETASSLVKNAIQ) are PKA-RII subunit binding domain. Residues 410-427 (QLVNEMASDDNKINNLLQ) form a tethers NFATC2 to CRAC channels region.

Binding protein for dimer of the RII-beta regulatory subunit of cAMP-dependent protein kinase (PKA) and also for the protein kinase C (PKC) and the phosphatase calcineurin (PP2B). Each enzyme is inhibited when bound to the anchoring protein. Also binds the beta2-adrenergic receptor. Part of a complex containing AKAP5, ADCY5, ADCY6 and PDE4C. Interacts with ADCY8, and enhances its phosphorylation at lipid rafts. Interacts with ORAI1 (isoform alpha) (via N-terminus) upon store depletion and in response to LTC4. Does not interact with ORAI2 and ORAI3 paralogs. Interacts (via leucine zipper domain) with NFATC2/NFAT1. Interacts with calmodulin; the interaction is calcium-independent. Interacts with KCNQ2; the interaction may help KCNQ2 channel complex to retain calcium-bound calmodulin. Interacts with KCNK2; the channel is recruited to postsynaptic microdomains by AKAP5 where it can integrate neurotransmitter receptor signals. Part of a complex composed of AKAP5 and ADRB2. Post-translationally, palmitoylated. Palmitoylation at Cys-36 and Cys-129 play a key role in the targeting of AKAP5 to lipid rafts. Palmitoylation by ZDHHC2 is required for AKAP5 function in LTP-stimulated recycling endosome exocytosis. As to expression, predominantly in the cerebral cortex and the postsynaptic densities of the forebrain, and to a lesser extent in adrenal medulla, lung and anterior pituitary.

It localises to the postsynaptic recycling endosome membrane. The protein resides in the cell projection. The protein localises to the dendrite. It is found in the postsynaptic cell membrane. Functionally, multivalent scaffold protein that anchors the cAMP-dependent protein kinase/PKA to cytoskeletal and/or organelle-associated proteins, targeting the signal carried by cAMP to specific intracellular effectors. Association with the beta2-adrenergic receptor (beta2-AR) not only regulates beta2-AR signaling pathway, but also the activation by PKA by switching off the beta2-AR signaling cascade. Plays a role in long term synaptic potentiation by regulating protein trafficking from the dendritic recycling endosomes to the plasma membrane and controlling both structural and functional plasticity at excitatory synapses. In hippocampal pyramidal neurons, recruits KCNK2/TREK-1 channel at postsynaptic dense bodies microdomains and converts it to a leak channel no longer sensitive to stimulation by arachidonic acid, acidic pH or mechanical stress, nor inhibited by Gq-coupled receptors but still under the negative control of Gs-coupled receptors. Associates with ORAI1 pore-forming subunit of CRAC channels in Ca(2+) signaling microdomains where it recruits NFATC2/NFAT1 and couples store-operated Ca(2+) influx to calmodulin and calcineurin signaling and activation of NFAT-dependent transcriptional responses. The protein is A-kinase anchor protein 5 (AKAP5) of Homo sapiens (Human).